The primary structure comprises 771 residues: ATP-dependent DNA helicase UvrD1 (771 aa).

A disordered region spans residues 1–21; that stretch reads MSVHATDAKPPGPSPADQLLD. Residues 21–311 form the UvrD-like helicase ATP-binding domain; sequence DGLNPQQRQA…ILLEQNYRST (291 aa). ATP is bound by residues 45–50 and Arg309; that span reads GSGKTA. Residues 312-603 form the UvrD-like helicase C-terminal domain; it reads QNILSAANSV…TLMTLHTAKG (292 aa). The interval 691–716 is disordered; it reads FSAPVSGAGRFGSARPSPTRSGASRR.

The protein belongs to the helicase family. UvrD subfamily. As to quaternary structure, monomer. Mg(2+) serves as cofactor.

The enzyme catalyses Couples ATP hydrolysis with the unwinding of duplex DNA by translocating in the 3'-5' direction.. It carries out the reaction ATP + H2O = ADP + phosphate + H(+). DNA-dependent ATPase, acting on dsDNA with a 3'-ssDNA tail, unwinding with 3'-to 5'-polarity. Also highly efficient on nicked DNA. Involved in the post-incision events of nucleotide excision repair. In Mycobacterium bovis (strain ATCC BAA-935 / AF2122/97), this protein is ATP-dependent DNA helicase UvrD1 (uvrD1).